Consider the following 229-residue polypeptide: Histidine biosynthesis bifunctional protein HisIE (229 aa).

The interval 1–127 (MNTLLDGIDW…APDTSALYGV (127 aa)) is phosphoribosyl-AMP cyclohydrolase. The phosphoribosyl-ATP pyrophosphohydrolase stretch occupies residues 128–229 (VDRLYHELLA…IAEKNSRKDS (102 aa)).

In the N-terminal section; belongs to the PRA-CH family. It in the C-terminal section; belongs to the PRA-PH family.

It is found in the cytoplasm. The enzyme catalyses 1-(5-phospho-beta-D-ribosyl)-ATP + H2O = 1-(5-phospho-beta-D-ribosyl)-5'-AMP + diphosphate + H(+). It catalyses the reaction 1-(5-phospho-beta-D-ribosyl)-5'-AMP + H2O = 1-(5-phospho-beta-D-ribosyl)-5-[(5-phospho-beta-D-ribosylamino)methylideneamino]imidazole-4-carboxamide. Its pathway is amino-acid biosynthesis; L-histidine biosynthesis; L-histidine from 5-phospho-alpha-D-ribose 1-diphosphate: step 2/9. It participates in amino-acid biosynthesis; L-histidine biosynthesis; L-histidine from 5-phospho-alpha-D-ribose 1-diphosphate: step 3/9. This chain is Histidine biosynthesis bifunctional protein HisIE, found in Wolinella succinogenes (strain ATCC 29543 / DSM 1740 / CCUG 13145 / JCM 31913 / LMG 7466 / NCTC 11488 / FDC 602W) (Vibrio succinogenes).